The chain runs to 488 residues: 3-octaprenyl-4-hydroxybenzoate carboxy-lyase (488 aa).

N172 contributes to the Mn(2+) binding site. Residues 175–177, 189–191, and 194–195 contribute to the prenylated FMN site; these read IYR, RWL, and RG. E238 is a Mn(2+) binding site. The Proton donor role is filled by D287.

The protein belongs to the UbiD family. Homohexamer. The cofactor is prenylated FMN. Mn(2+) serves as cofactor.

It is found in the cell membrane. The enzyme catalyses a 4-hydroxy-3-(all-trans-polyprenyl)benzoate + H(+) = a 2-(all-trans-polyprenyl)phenol + CO2. It participates in cofactor biosynthesis; ubiquinone biosynthesis. In terms of biological role, catalyzes the decarboxylation of 3-octaprenyl-4-hydroxy benzoate to 2-octaprenylphenol, an intermediate step in ubiquinone biosynthesis. The protein is 3-octaprenyl-4-hydroxybenzoate carboxy-lyase of Alteromonas mediterranea (strain DSM 17117 / CIP 110805 / LMG 28347 / Deep ecotype).